We begin with the raw amino-acid sequence, 299 residues long: Inosose dehydratase (299 aa).

The protein belongs to the IolE/MocC family. Glutathione is required as a cofactor. Requires Co(2+) as cofactor. Mn(2+) serves as cofactor.

It carries out the reaction scyllo-inosose = 3D-3,5/4-trihydroxycyclohexane-1,2-dione + H2O. Functionally, catalyzes the dehydration of inosose (2-keto-myo-inositol, 2KMI or 2,4,6/3,5-pentahydroxycyclohexanone) to 3D-(3,5/4)-trihydroxycyclohexane-1,2-dione (D-2,3-diketo-4-deoxy-epi-inositol). The sequence is that of Inosose dehydratase from Klebsiella pneumoniae (strain 342).